The primary structure comprises 196 residues: Large ribosomal subunit protein bL25 (196 aa).

It belongs to the bacterial ribosomal protein bL25 family. CTC subfamily. As to quaternary structure, part of the 50S ribosomal subunit; part of the 5S rRNA/L5/L18/L25 subcomplex. Contacts the 5S rRNA. Binds to the 5S rRNA independently of L5 and L18.

Functionally, this is one of the proteins that binds to the 5S RNA in the ribosome where it forms part of the central protuberance. This chain is Large ribosomal subunit protein bL25, found in Treponema pallidum subsp. pallidum (strain SS14).